The primary structure comprises 263 residues: E3 ubiquitin-protein ligase SINA-like 8 (263 aa).

The RING-type; degenerate zinc finger occupies 35-71 (CPICCEGLTCPIFQCENGHLACSSCCPKLRNKCPACP). An SBD region spans residues 75–261 (ILESILVTCP…IKLSIVETSN (187 aa)). The segment at 78–136 (SILVTCPNDMFGCTESFLYGKKSTHEEECIFSLCSCPSLDCEYSGRYEDLYDHYKLTHI) adopts an SIAH-type zinc-finger fold. 8 residues coordinate Zn(2+): cysteine 83, cysteine 90, histidine 102, cysteine 106, cysteine 113, cysteine 118, histidine 130, and histidine 135.

This sequence belongs to the SINA (Seven in absentia) family.

It carries out the reaction S-ubiquitinyl-[E2 ubiquitin-conjugating enzyme]-L-cysteine + [acceptor protein]-L-lysine = [E2 ubiquitin-conjugating enzyme]-L-cysteine + N(6)-ubiquitinyl-[acceptor protein]-L-lysine.. Its pathway is protein modification; protein ubiquitination. Functionally, E3 ubiquitin-protein ligase that mediates ubiquitination and subsequent proteasomal degradation of target proteins. E3 ubiquitin ligases accept ubiquitin from an E2 ubiquitin-conjugating enzyme in the form of a thioester and then directly transfers the ubiquitin to targeted substrates. It probably triggers the ubiquitin-mediated degradation of different substrates. The polypeptide is E3 ubiquitin-protein ligase SINA-like 8 (Arabidopsis thaliana (Mouse-ear cress)).